The sequence spans 332 residues: L-lactate dehydrogenase A chain (332 aa).

The residue at position 2 (A2) is an N-acetylalanine. An N6-acetyllysine; alternate modification is found at K5. An N6-succinyllysine; alternate modification is found at K5. K14 is modified (N6-acetyllysine). 29–57 (GAVGMACAISILMKDLADEVALVDVMEDK) is an NAD(+) binding site. K57 carries the N6-acetyllysine; alternate modification. K57 participates in a covalent cross-link: Glycyl lysine isopeptide (Lys-Gly) (interchain with G-Cter in SUMO2); alternate. The residue at position 81 (K81) is an N6-acetyllysine. Substrate is bound at residue R106. K118 bears the N6-acetyllysine; alternate mark. K118 bears the N6-succinyllysine; alternate mark. An N6-acetyllysine modification is found at K126. NAD(+) is bound at residue N138. Residues N138 and R169 each coordinate substrate. H193 serves as the catalytic Proton acceptor. An N6-acetyllysine mark is found at K224 and K232. Y239 is modified (phosphotyrosine). K243 bears the N6-acetyllysine mark. Substrate is bound at residue T248. A Phosphothreonine modification is found at T309. The residue at position 318 (K318) is an N6-acetyllysine; alternate. K318 carries the N6-succinyllysine; alternate modification. Phosphothreonine is present on T322.

Belongs to the LDH/MDH superfamily. LDH family. Homotetramer. Interacts with PTEN upstream reading frame protein MP31. Post-translationally, ISGylated.

The protein resides in the cytoplasm. The catalysed reaction is (S)-lactate + NAD(+) = pyruvate + NADH + H(+). The protein operates within fermentation; pyruvate fermentation to lactate; (S)-lactate from pyruvate: step 1/1. Functionally, interconverts simultaneously and stereospecifically pyruvate and lactate with concomitant interconversion of NADH and NAD(+). In Bos mutus grunniens (Wild yak), this protein is L-lactate dehydrogenase A chain (LDHA).